We begin with the raw amino-acid sequence, 251 residues long: tRNA (guanine-N(1)-)-methyltransferase (251 aa).

Residues G114 and 134-139 contribute to the S-adenosyl-L-methionine site; that span reads IGDYVL.

It belongs to the RNA methyltransferase TrmD family. Homodimer.

The protein localises to the cytoplasm. It carries out the reaction guanosine(37) in tRNA + S-adenosyl-L-methionine = N(1)-methylguanosine(37) in tRNA + S-adenosyl-L-homocysteine + H(+). Its function is as follows. Specifically methylates guanosine-37 in various tRNAs. This is tRNA (guanine-N(1)-)-methyltransferase from Pelotomaculum thermopropionicum (strain DSM 13744 / JCM 10971 / SI).